The chain runs to 66 residues: Regulator of G-protein signaling 6 (66 aa).

The RGS domain occupies 1–66 (LAVQDLKKQP…EDAQEHIYKL (66 aa)).

Interacts with GNB5. Interacts with RGS7BP, leading to regulate the subcellular location of the heterodimer formed with GNB5. Interacts with GNAI1.

It is found in the cytoplasm. The protein resides in the cytosol. It localises to the membrane. Its subcellular location is the nucleus. The protein localises to the cell membrane. Regulates G protein-coupled receptor signaling cascades. Inhibits signal transduction by increasing the GTPase activity of G protein alpha subunits, thereby driving them into their inactive GDP-bound form. The RGS6/GNB5 dimer enhances GNAO1 GTPase activity. This is Regulator of G-protein signaling 6 (Rgs6) from Rattus norvegicus (Rat).